Consider the following 81-residue polypeptide: Putative sulfur carrier protein VNG_5061C/VNG_5236C/VNG_6059C/VNG_6467C (81 aa).

Cysteine 18 acts as the Cysteine persulfide intermediate in catalysis.

It belongs to the sulfur carrier protein TusA family.

This Halobacterium salinarum (strain ATCC 700922 / JCM 11081 / NRC-1) (Halobacterium halobium) protein is Putative sulfur carrier protein VNG_5061C/VNG_5236C/VNG_6059C/VNG_6467C.